We begin with the raw amino-acid sequence, 37 residues long: Unknown protein 25 (37 aa).

In Pseudotsuga menziesii (Douglas-fir), this protein is Unknown protein 25.